Consider the following 458-residue polypeptide: Sugar transporter ERD6-like 10 (458 aa).

Transmembrane regions (helical) follow at residues 17-37 (ITAC…SYGC), 66-86 (FLNL…VILG), 96-116 (LFCI…WLDL), 119-139 (ISLG…IAEI), 150-170 (ASTL…GTVI), 174-194 (VLAV…YFIP), 257-277 (LVVG…GITY), 292-312 (LGSM…LILV), 319-339 (PLLL…GVSF), 350-370 (FIPV…AIGI), 393-413 (IVAL…NFMF), and 419-439 (GTFY…WMLV).

It belongs to the major facilitator superfamily. Sugar transporter (TC 2.A.1.1) family.

The protein localises to the membrane. Functionally, sugar transporter. In Arabidopsis thaliana (Mouse-ear cress), this protein is Sugar transporter ERD6-like 10.